Reading from the N-terminus, the 88-residue chain is Small ribosomal subunit protein bS16 (88 aa).

It belongs to the bacterial ribosomal protein bS16 family.

The chain is Small ribosomal subunit protein bS16 from Geotalea uraniireducens (strain Rf4) (Geobacter uraniireducens).